The sequence spans 89 residues: Small ribosomal subunit protein uS15 (89 aa).

This sequence belongs to the universal ribosomal protein uS15 family. In terms of assembly, part of the 30S ribosomal subunit. Forms a bridge to the 50S subunit in the 70S ribosome, contacting the 23S rRNA.

Its function is as follows. One of the primary rRNA binding proteins, it binds directly to 16S rRNA where it helps nucleate assembly of the platform of the 30S subunit by binding and bridging several RNA helices of the 16S rRNA. In terms of biological role, forms an intersubunit bridge (bridge B4) with the 23S rRNA of the 50S subunit in the ribosome. This Yersinia pseudotuberculosis serotype O:1b (strain IP 31758) protein is Small ribosomal subunit protein uS15.